A 216-amino-acid polypeptide reads, in one-letter code: Uracil phosphoribosyltransferase (216 aa).

5-phospho-alpha-D-ribose 1-diphosphate is bound by residues arginine 84, arginine 109, and 137–145 (DPMLATGGS). Uracil contacts are provided by residues isoleucine 202 and 207-209 (GDA). Aspartate 208 lines the 5-phospho-alpha-D-ribose 1-diphosphate pocket.

This sequence belongs to the UPRTase family. It depends on Mg(2+) as a cofactor.

The catalysed reaction is UMP + diphosphate = 5-phospho-alpha-D-ribose 1-diphosphate + uracil. It functions in the pathway pyrimidine metabolism; UMP biosynthesis via salvage pathway; UMP from uracil: step 1/1. Allosterically activated by GTP. Catalyzes the conversion of uracil and 5-phospho-alpha-D-ribose 1-diphosphate (PRPP) to UMP and diphosphate. The chain is Uracil phosphoribosyltransferase from Nostoc sp. (strain PCC 7120 / SAG 25.82 / UTEX 2576).